The sequence spans 262 residues: Fibroin light chain (262 aa).

Residues 1–16 form the signal peptide; the sequence is MKPIFLVLLVATSAYA. Ser19 bears the N-acetylserine; in short form mark. Cys101 and Cys160 form a disulfide bridge.

As to quaternary structure, silk fibroin elementary unit consists in a disulfide-linked heavy and light chain and a p25 glycoprotein in molar ratios of 6:6:1. This results in a complex of approximately 2.3 MDa. The interchain disulfide bridge is essential for the intracellular transport and secretion of fibroin. In terms of processing, partially N-terminally processed to yield a short form which lacks the first two residues of the long form. Produced exclusively in the posterior (PSG) section of silk glands, which are essentially modified salivary glands.

It is found in the secreted. In terms of biological role, it is likely that the major role of L-chain is to prevent the retention of H-chain in ER by forming the disulfide linkage. The sequence is that of Fibroin light chain (FIBL) from Bombyx mori (Silk moth).